A 639-amino-acid polypeptide reads, in one-letter code: Chaperone protein DnaK (639 aa).

Residue threonine 197 is modified to Phosphothreonine; by autocatalysis. Positions 600-639 (SGAQGGAQAGPDMNAGQSNAGQNNGKQDDNVQDADFEEVK) are disordered. Over residues 613-624 (NAGQSNAGQNNG) the composition is skewed to low complexity. Acidic residues predominate over residues 629 to 639 (NVQDADFEEVK).

It belongs to the heat shock protein 70 family.

Acts as a chaperone. The polypeptide is Chaperone protein DnaK (Bacteroides fragilis (strain ATCC 25285 / DSM 2151 / CCUG 4856 / JCM 11019 / LMG 10263 / NCTC 9343 / Onslow / VPI 2553 / EN-2)).